Here is a 397-residue protein sequence, read N- to C-terminus: Dual specificity mitogen-activated protein kinase kinase 4 (397 aa).

Positions 1–38 (MAAPSPSGGGGSGGGGGTPGPIGPPASGHPAVSSMQGK) are disordered. N-acetylalanine is present on A2. Residues 7–20 (SGGGGSGGGGGTPG) show a composition bias toward gly residues. The segment at 35–50 (MQGKRKALKLNFANPP) is d domain. R56 bears the Asymmetric dimethylarginine; alternate mark. Residue R56 is modified to Omega-N-methylarginine; alternate. The residue at position 88 (S88) is a Phosphoserine. Residues 100 to 366 (LKDLGEIGRG…KELLKHPFIL (267 aa)) form the Protein kinase domain. ATP-binding positions include 106–114 (IGRGAYGSV) and K129. D227 acts as the Proton acceptor in catalysis. Phosphoserine is present on S255. T259 is subject to Phosphothreonine. The DVD domain stretch occupies residues 362-385 (HPFILMYEERTVEVACYVCKILDQ).

It belongs to the protein kinase superfamily. STE Ser/Thr protein kinase family. MAP kinase kinase subfamily. In terms of assembly, interacts with SPAG9. Interacts (via its D domain) with its substrates MAPK8/JNK1, MAPK9/JNK2, MAPK10/JNK3, MAPK11 and MAPK14. Interacts (via its DVD domain) with MAP3Ks activators like MAP3K1/MEKK1 and MAP3K11/MLK3. Interacts with ARRB1, ARRB2 and MAPK8IP3/JIP3. In terms of processing, activated by phosphorylation on Ser-255 and Thr-259 by MAP kinase kinase kinases (MAP3Ks). Strong expression is detected in most of the central nervous system and in liver and thymus during early stages of development. While expression in nervous system increases over time, expression in fetal liver and thymus gradually decreases as embryogenesis proceeds. High level of expression in the central nervous system persists throughout postnatal development and remained at a stable level in adult brain.

The protein resides in the cytoplasm. The protein localises to the nucleus. The enzyme catalyses L-seryl-[protein] + ATP = O-phospho-L-seryl-[protein] + ADP + H(+). It catalyses the reaction L-threonyl-[protein] + ATP = O-phospho-L-threonyl-[protein] + ADP + H(+). It carries out the reaction L-tyrosyl-[protein] + ATP = O-phospho-L-tyrosyl-[protein] + ADP + H(+). Its activity is regulated as follows. Activated in response to a variety of cellular stresses, including UV and gamma-irradiation, heat shock, hyperosmolarity, T-cell receptor stimulation, peroxide and inflammatory cytokines. Also activated by developmental cues. MAP2K4/MKK4 is activated by the majority of MKKKs, such as MAP3K5/ASK1, MAP3K1/MEKK1, MAP3K7/TAK1, MAP3K10/MLK2, MAP3K11/MLK3, MAP3K12/DLK and MAP3K13/LZK. In terms of biological role, dual specificity protein kinase which acts as an essential component of the MAP kinase signal transduction pathway. Essential component of the stress-activated protein kinase/c-Jun N-terminal kinase (SAP/JNK) signaling pathway. With MAP2K7/MKK7, is the one of the only known kinase to directly activate the stress-activated protein kinase/c-Jun N-terminal kinases MAPK8/JNK1, MAPK9/JNK2 and MAPK10/JNK3. MAP2K4/MKK4 and MAP2K7/MKK7 both activate the JNKs by phosphorylation, but they differ in their preference for the phosphorylation site in the Thr-Pro-Tyr motif. MAP2K4 shows preference for phosphorylation of the Tyr residue and MAP2K7/MKK7 for the Thr residue. The phosphorylation of the Thr residue by MAP2K7/MKK7 seems to be the prerequisite for JNK activation at least in response to pro-inflammatory cytokines, while other stimuli activate both MAP2K4/MKK4 and MAP2K7/MKK7 which synergistically phosphorylate JNKs. MAP2K4 is required for maintaining peripheral lymphoid homeostasis. The MKK/JNK signaling pathway is also involved in mitochondrial death signaling pathway, including the release cytochrome c, leading to apoptosis. Whereas MAP2K7/MKK7 exclusively activates JNKs, MAP2K4/MKK4 additionally activates the p38 MAPKs MAPK11, MAPK12, MAPK13 and MAPK14. In Mus musculus (Mouse), this protein is Dual specificity mitogen-activated protein kinase kinase 4 (Map2k4).